The sequence spans 3971 residues: Mycosubtilin synthase subunit A (3971 aa).

Residues 160–479 (EPEADELAFI…ELEDIDLGRV (320 aa)) form an acyl-CoA ligase region. The region spanning 578 to 653 (TPIHEIETAL…DLAAFLVENH (76 aa)) is the Carrier 1 domain. S613 is subject to O-(pantetheine 4'-phosphoryl)serine. The Ketosynthase family 3 (KS3) domain maps to 669–1092 (SKDIAIIGMS…GTNAHVVLEE (424 aa)). Catalysis depends on for beta-ketoacyl synthase activity residues C843, H974, and H1014. The Carrier 2 domain maps to 1290 to 1365 (THIESFLKTV…SVVDYLAENV (76 aa)). S1324 is modified (O-(pantetheine 4'-phosphoryl)serine). Residues 1434 to 1456 (ESEISQDKTSLSPKSVTAKKNSA) are disordered. Polar residues predominate over residues 1440–1456 (DKTSLSPKSVTAKKNSA). Residues 1529–1856 (IIAERSDGSR…SYFEQSQVPI (328 aa)) are GSA-AT. N6-(pyridoxal phosphate)lysine is present on K1759. The segment at 1921–1942 (GGFIPEGPDSPNDGGHKEPETY) is disordered. Positions 1938–2240 (EPETYELSPE…NMVPVKNTAS (303 aa)) are condensation 1. Residues 2405 to 2480 (EPENETELQI…ELANFIRGEK (76 aa)) form the Carrier 3 domain. At S2440 the chain carries O-(pantetheine 4'-phosphoryl)serine. The tract at residues 2492-2781 (QKAFYRTSPA…QTMGIRTKPQ (290 aa)) is condensation 2. Residues 2937-3823 (PHNDTVCQWF…RNHPAGRKIF (887 aa)) are domain 1 (asparagine-activating). The segment at 2967–3364 (TYGQLNERVN…KVEAVQKAVV (398 aa)) is adenylation 1. Positions 3442 to 3517 (PPGNEVESKL…QLANMALRME (76 aa)) constitute a Carrier 4 domain. S3477 carries the O-(pantetheine 4'-phosphoryl)serine modification. Residues 3529–3818 (KISYYPVSSA…NTLVIRNHPA (290 aa)) form a condensation 3 region.

This sequence belongs to the ATP-dependent AMP-binding enzyme family. It depends on pyridoxal 5'-phosphate as a cofactor. Requires pantetheine 4'-phosphate as cofactor.

In terms of biological role, this protein is a multifunctional enzyme, able to activate a long chain fatty acid and link it with the amino acid Asn as part of the synthesis of mycosubtilin. The activation sites consist of individual domains. This Bacillus subtilis protein is Mycosubtilin synthase subunit A (mycA).